The sequence spans 468 residues: uncharacterized protein (468 aa).

6 consecutive transmembrane segments (helical) span residues 59-79, 135-155, 215-235, 297-317, 348-368, and 385-405; these read IPIVIIAVIYSSFIFFFALFI, TWINSILEILALIYSFLLLLV, VFPFTPCPLPLLLFPIFLSIL, THCCLNVFASSAFFVLLMVLV, HFIPLILTVVIELVITGLVSY, and VFTVMFTIIAVFRFVFIIILF.

It localises to the membrane. This is an uncharacterized protein from Caenorhabditis elegans.